Here is a 420-residue protein sequence, read N- to C-terminus: Melatonin receptor type 1C (420 aa).

Topologically, residues 1–34 (MMEVNSTCLDCRTPGTIRTEQDAQDSASQGLTSA) are extracellular. Asn-5 carries N-linked (GlcNAc...) asparagine glycosylation. Residues 35-55 (LAVVLIFTIVVDVLGNILVIL) traverse the membrane as a helical segment. Topologically, residues 56–73 (SVLRNKKLQNAGNLFVVS) are cytoplasmic. A helical transmembrane segment spans residues 74–94 (LSIADLVVAVYPYPVILIAIF). Over 95–106 (QNGWTLGNIHCQ) the chain is Extracellular. The cysteines at positions 105 and 182 are disulfide-linked. The helical transmembrane segment at 107–127 (ISGFLMGLSVIGSVFNITAIA) threads the bilayer. Residues 128 to 152 (INRYCYICHSLRYDKLYNQRSTWCY) are Cytoplasmic-facing. The helical transmembrane segment at 153-173 (LGLTWILTIIAIVPNFFVGSL) threads the bilayer. At 174 to 192 (QYDPRIFSCTFAQTVSSSY) the chain is on the extracellular side. A helical transmembrane segment spans residues 193-213 (TITVVVVHFIVPLSVVTFCYL). The Cytoplasmic segment spans residues 214–245 (RIWVLVIQVKHRVRQDFKQKLTQTDLRNFLTM). Residues 246-266 (FVVFVLFAVCWAPLNFIGLAV) form a helical membrane-spanning segment. Residues 267 to 279 (AINPFHVAPKIPE) lie on the Extracellular side of the membrane. A helical transmembrane segment spans residues 280–303 (WLFVLSYFMAYFNSCLNAVIYGVL). At 304–420 (NQNFRKEYKR…ELCKDGISQR (117 aa)) the chain is on the cytoplasmic side.

The protein belongs to the G-protein coupled receptor 1 family. Moderately expressed in dermal melanophores.

Its subcellular location is the cell membrane. Functionally, high affinity receptor for melatonin. Likely to mediate the potent effects of melatonin on pigment aggregation in melanophores. The activity of this receptor is mediated by pertussis toxin sensitive G proteins that inhibit adenylate cyclase activity. In Xenopus laevis (African clawed frog), this protein is Melatonin receptor type 1C (mtnr1c).